Here is a 921-residue protein sequence, read N- to C-terminus: Leucine--tRNA ligase (921 aa).

Residues 80–90 carry the 'HIGH' region motif; the sequence is PYPSGKLHMGH. The short motif at 667–671 is the 'KMSKS' region element; that stretch reads KMSKS. Lysine 670 is a binding site for ATP.

It belongs to the class-I aminoacyl-tRNA synthetase family.

It localises to the cytoplasm. It catalyses the reaction tRNA(Leu) + L-leucine + ATP = L-leucyl-tRNA(Leu) + AMP + diphosphate. The protein is Leucine--tRNA ligase of Psychrobacter arcticus (strain DSM 17307 / VKM B-2377 / 273-4).